A 492-amino-acid chain; its full sequence is Cytochrome P450 monooxygenase ATEG_03631 (492 aa).

The chain crosses the membrane as a helical span at residues 10-30 (FATLNPMVVVAIPVFLFVISL). The N-linked (GlcNAc...) asparagine glycan is linked to Asn-309. Cys-457 lines the heme pocket.

The protein belongs to the cytochrome P450 family. The cofactor is heme.

The protein resides in the membrane. The protein operates within secondary metabolite biosynthesis. In terms of biological role, cytochrome P450 monooxygenase; part of the cluster A that mediates the biosynthesis of azasperpyranones, members of the azaphilone family that exhibit anti-cancer activities. Azasperpyranones are synthesized by 2 clusters, A and B. Cluster A is responsible for the production of the polyhydric phenol moiety while the azaphilonoid scaffold is produced by the cluster B. The non-reducing polyketide synthase ATEG_03629 produces 5-methyl orsellinic acid, which is then reduced to 5-methyl orsellinic aldehyde by the NRPS-like protein ATEG_03630. 5-methyl orsellinic aldehyde is then first hydroxylated by the FAD-dependent monooxygenase ATEG_03635 and subsequently hydroxylated by the cytochrome P450 monooxygenase ATEG_03631 to produce the unstable polyhydric phenol precursor of azasperpyranones. On the other hand, the polyketide synthase ATEG_07659 is responsible for producing the 3,5-dimethyloctadienone moiety from acetyl-CoA, three malonyl-CoA, and two S-adenosyl methionines (SAM). The 3,5-dimethyloctadienone moiety is then loaded onto the SAT domain of ATEG_07661 and extended with four malonyl-CoA and one SAM, which leads to the formation of 2,4-dihydroxy-6-(5,7-dimethyl-2-oxo-trans-3-trans-5-nonadienyl)-3-methylbenzaldehyde (compound 8) after reductive release and aldol condensation. The FAD-dependent monooxygenase ATEG_07662 is the next enzyme in the biosynthesis sequence and hydroxylates the side chain at the benzylic position of compound 8. In Aspergillus nidulans, afoF, the ortholog of the FAD-dependent oxygenase ATEG_07660, is the key enzyme for the biosynthesis of asperfuranone by catalyzing the hydroxylation at C-8 of to prevent the formation of a six-membered ring hemiacetal intermediate and thus facilitating the formation of a five-membered ring to produce asperfuranone. In Aspergillus terreus, ATEG_07660 is probably not functional, which leads to the formation of the six-membered ring hemiacetal intermediate presperpyranone instead of asperfuranone. Finally, ATEG_03636 is involved in the condensation of the polyhydric phenol moiety produced by cluster A and the perasperpyranone precursor produced by cluster B, to yield azasperpyranone A. Further modifications of azasperpyranone A result in the production of derivatives, including azasperpyranone B to F. The chain is Cytochrome P450 monooxygenase ATEG_03631 from Aspergillus terreus (strain NIH 2624 / FGSC A1156).